Reading from the N-terminus, the 87-residue chain is Protein L (87 aa).

This protein inhibits the multiplication of double-stranded DNA phages, such as P1 and lambda. In Escherichia coli, this protein is Protein L (L).